Here is a 497-residue protein sequence, read N- to C-terminus: Serine hydroxymethyltransferase (497 aa).

Residues Leu-176 and 180 to 182 (GHL) each bind (6S)-5,6,7,8-tetrahydrofolate. Lys-289 is subject to N6-(pyridoxal phosphate)lysine.

This sequence belongs to the SHMT family. As to quaternary structure, homodimer. Pyridoxal 5'-phosphate is required as a cofactor.

The protein localises to the cytoplasm. The enzyme catalyses (6R)-5,10-methylene-5,6,7,8-tetrahydrofolate + glycine + H2O = (6S)-5,6,7,8-tetrahydrofolate + L-serine. It participates in one-carbon metabolism; tetrahydrofolate interconversion. It functions in the pathway amino-acid biosynthesis; glycine biosynthesis; glycine from L-serine: step 1/1. In terms of biological role, catalyzes the reversible interconversion of serine and glycine with tetrahydrofolate (THF) serving as the one-carbon carrier. This reaction serves as the major source of one-carbon groups required for the biosynthesis of purines, thymidylate, methionine, and other important biomolecules. Also exhibits THF-independent aldolase activity toward beta-hydroxyamino acids, producing glycine and aldehydes, via a retro-aldol mechanism. This is Serine hydroxymethyltransferase from Chlamydia felis (strain Fe/C-56) (Chlamydophila felis).